Consider the following 341-residue polypeptide: Phosphate acyltransferase (341 aa).

This sequence belongs to the PlsX family. In terms of assembly, homodimer. Probably interacts with PlsY.

The protein resides in the cytoplasm. It carries out the reaction a fatty acyl-[ACP] + phosphate = an acyl phosphate + holo-[ACP]. It participates in lipid metabolism; phospholipid metabolism. Its function is as follows. Catalyzes the reversible formation of acyl-phosphate (acyl-PO(4)) from acyl-[acyl-carrier-protein] (acyl-ACP). This enzyme utilizes acyl-ACP as fatty acyl donor, but not acyl-CoA. The polypeptide is Phosphate acyltransferase (Vibrio vulnificus (strain CMCP6)).